Consider the following 1317-residue polypeptide: DNA-directed RNA polymerase subunit beta' (1317 aa).

The Zn(2+) site is built by cysteine 214, cysteine 286, cysteine 293, and cysteine 296. The segment at 1279–1317 is disordered; that stretch reads RAYAGTQLSQDDEEFEETYDTDEDDFDMDDDDDFGDDED. The segment covering 1288 to 1317 has biased composition (acidic residues); the sequence is QDDEEFEETYDTDEDDFDMDDDDDFGDDED.

Belongs to the RNA polymerase beta' chain family. RpoC2 subfamily. In cyanobacteria the RNAP catalytic core is composed of 2 alpha, 1 beta, 1 beta', 1 gamma and 1 omega subunit. When a sigma factor is associated with the core the holoenzyme is formed, which can initiate transcription. The cofactor is Zn(2+).

The enzyme catalyses RNA(n) + a ribonucleoside 5'-triphosphate = RNA(n+1) + diphosphate. In terms of biological role, DNA-dependent RNA polymerase catalyzes the transcription of DNA into RNA using the four ribonucleoside triphosphates as substrates. The polypeptide is DNA-directed RNA polymerase subunit beta' (Synechocystis sp. (strain ATCC 27184 / PCC 6803 / Kazusa)).